Consider the following 732-residue polypeptide: Small conductance calcium-activated potassium channel protein 3 (732 aa).

Over residues 1–11 (MDTSGHFHDSG) the composition is skewed to basic and acidic residues. Disordered stretches follow at residues 1–82 (MDTS…QQAP) and 103–162 (HSSP…ASPL). Over residues 35–59 (QPPPPSAPPAVPQQPPGPLLQPQPP) the composition is skewed to pro residues. Residues 60–82 (QLQQQQQQQQQQQQQQQQQQQAP) are compositionally biased toward low complexity. The segment covering 113 to 133 (NSANSTAILHPSSRQGSQLNL) has biased composition (polar residues). Low complexity predominate over residues 139 to 148 (GHSPSSTATS). The residue at position 168 (Ser-168) is a Phosphoserine. Positions 241 to 257 (THNHQHAGTTAGSTTFP) are enriched in polar residues. The segment at 241 to 260 (THNHQHAGTTAGSTTFPKAN) is disordered. Residues 289 to 309 (LIFGMFGIVVMVIETELSWGL) traverse the membrane as a helical segment. A helical membrane pass occupies residues 316–336 (FSLALKCLISLSTIILLGLII). Residues 367-387 (ISLEMLVCAIHPIPGEYKFFW) traverse the membrane as a helical segment. The helical transmembrane segment at 406 to 426 (IILSIPMFLRLYLIARVMLLH) threads the bilayer. A helical membrane pass occupies residues 455-475 (LMTICPGTVLLVFSISLWIIA). The segment at residues 495-515 (FLGAMWLISITFLSIGYGDMV) is an intramembrane region (pore-forming). A helical membrane pass occupies residues 524-544 (VCLLTGIMGAGCTALVVAVVA). The calmodulin-binding stretch occupies residues 562–638 (DTQLTKRIKN…LVDLSKMQNV (77 aa)). A coiled-coil region spans residues 643–670 (ITELNDRSEDLEKQIGSLESKLEHLTAS). Residues 704–732 (GTSHAPPSDSPIGISSTSFPTPYTSSSSC) form a disordered region. Low complexity predominate over residues 718–732 (SSTSFPTPYTSSSSC).

It belongs to the potassium channel KCNN family. KCa2.3/KCNN3 subfamily. In terms of assembly, homodimer. Heteromultimer with KCNN2 or KCNN1; this modulates plasma membrane expression and consequently the small conductance calcium-activated potassium channel activity. The complex is composed of 4 channel subunits each of which binds to a calmodulin subunit which regulates the channel activity through calcium-binding. Interacts with CALM1.

The protein localises to the cell membrane. It localises to the cytoplasm. It is found in the myofibril. Its subcellular location is the sarcomere. The protein resides in the z line. It carries out the reaction K(+)(in) = K(+)(out). Its activity is regulated as follows. Inhibited by bee venom neurotoxin apamin. Its function is as follows. Small conductance calcium-activated potassium channel that mediates the voltage-independent transmembrane transfer of potassium across the cell membrane through a constitutive interaction with calmodulin which binds the intracellular calcium allowing its opening. The current is characterized by a voltage-independent activation, an intracellular calcium concentration increase-dependent activation and a single-channel conductance of 10 picosiemens. Also presents an inwardly rectifying current, thus reducing its already small outward conductance of potassium ions, which is particularly the case when the membrane potential displays positive values, above + 20 mV. Activation is followed by membrane hyperpolarization. Thought to regulate neuronal excitability by contributing to the slow component of synaptic afterhyperpolarization. The protein is Small conductance calcium-activated potassium channel protein 3 of Rattus norvegicus (Rat).